The chain runs to 354 residues: Ion-translocating oxidoreductase complex subunit D (354 aa).

Transmembrane regions (helical) follow at residues 9–28, 67–87, and 117–137; these read IMLH…LYLF, LLSG…WIAV, and VALL…LPLG. T165 is modified (FMN phosphoryl threonine). The next 5 helical transmembrane spans lie at 200–220, 222–242, 249–269, 277–297, and 301–321; these read GSLG…LLAL, IIHW…AALA, VHGG…ALFI, PISR…VFVI, and GNFP…VPLI.

The protein belongs to the NqrB/RnfD family. The complex is composed of six subunits: RnfA, RnfB, RnfC, RnfD, RnfE and RnfG. FMN serves as cofactor.

Its subcellular location is the cell inner membrane. Its function is as follows. Part of a membrane-bound complex that couples electron transfer with translocation of ions across the membrane. This Stutzerimonas stutzeri (Pseudomonas stutzeri) protein is Ion-translocating oxidoreductase complex subunit D.